A 462-amino-acid chain; its full sequence is MTILKNIPKVDKVLGWEGLKSLLAAYPRPVVITAVRSSLEALRAEALRGETCAEAFAEKGVVGRIARELATVNALKLKRLVNGTGVVIHTNLGRSPLPESVRQALNEVAFGYSNLEFDLALGERGSRYSHVEGIICELTGAEAALVVNNNAAAVLLALSSLAAGKEVIVSRGELVEIGGSFRIPDVMRQSGAVLKEVGATNRTHPRDYSGAITPETALLLKVHCSNFAVVGFTAEVSAAELVELGRGHSLPVMADVGSGNLVELSGLLGCNEPTVQEFVRAGVDVITFSGDKLLGGPQAGIIVGKSSLLAPMKNHPLLRAVRIDKLTLAALEGTLRLYRDERRALKEIPTLRMLTASAADLSRTAKALLRRLQRAIPATVKLSLSAGFSQVGGGALPLLELPTTLIAVTADGMSAQDIETTLRGCPVPVIGRIFKGTFLLDPRTILNDDVPALIAALQTLAR.

K292 carries the post-translational modification N6-(pyridoxal phosphate)lysine.

The protein belongs to the SelA family. The cofactor is pyridoxal 5'-phosphate.

It is found in the cytoplasm. The catalysed reaction is L-seryl-tRNA(Sec) + selenophosphate + H(+) = L-selenocysteinyl-tRNA(Sec) + phosphate. Its pathway is aminoacyl-tRNA biosynthesis; selenocysteinyl-tRNA(Sec) biosynthesis; selenocysteinyl-tRNA(Sec) from L-seryl-tRNA(Sec) (bacterial route): step 1/1. Converts seryl-tRNA(Sec) to selenocysteinyl-tRNA(Sec) required for selenoprotein biosynthesis. This is L-seryl-tRNA(Sec) selenium transferase from Geotalea uraniireducens (strain Rf4) (Geobacter uraniireducens).